A 191-amino-acid chain; its full sequence is MKKTMSAITAAAAVTSCFTGFGAASFSAPAKAAAQTNTLSENTNQSAAELVKNLYNTAYKGEMPQQAQGLTINKSTKGDVHAAFGEPERPVGGDNRFDLYHWNMGQPGYGFSYHKDMTISEIRYFGTGVERQLNLGGVTPEVLQKQLGPVNRVLTVPFTDEIDYVYDTGRYELHFVIGTDQTADHVNLKAK.

The N-terminal stretch at 1-23 (MKKTMSAITAAAAVTSCFTGFGA) is a signal peptide.

This is an uncharacterized protein from Bacillus subtilis (strain 168).